A 768-amino-acid chain; its full sequence is Actin filament-associated protein 1-like 1 (768 aa).

A disordered region spans residues 82–145 (DLRDMPEDDG…GKSPEYISSH (64 aa)). 4 positions are modified to phosphoserine: serine 94, serine 98, serine 104, and serine 153. The interval 173–211 (GELKSSYNDSDAMSSSYESYDEEEEEGKSPQPRHQWPSE) is disordered. The span at 177–190 (SSYNDSDAMSSSYE) shows a compositional bias: low complexity. Positions 220–316 (ECRICAFLLR…WLKVIREVSK (97 aa)) constitute a PH 1 domain. Residues serine 329 and serine 343 each carry the phosphoserine modification. A PH 2 domain is found at 418 to 512 (EVPCCGYLNV…WLGLLLVEMG (95 aa)). Tyrosine 557 carries the phosphotyrosine modification. The disordered stretch occupies residues 566–604 (QDEEPERPTGAQVKRHASSCSEKSHRVDPQVKVKRHASS). The segment covering 587-596 (EKSHRVDPQV) has biased composition (basic and acidic residues). Positions 611–700 (GKNRAEEDAR…VAVKERLQQS (90 aa)) form a coiled coil. The segment at 705–768 (PALGLSVSSK…KAKEWEMKKT (64 aa)) is disordered. Over residues 710–729 (SVSSKPKSGETANKPQNSVP) the composition is skewed to polar residues. Serine 747 is subject to Phosphoserine. Residues 759–768 (KAKEWEMKKT) are compositionally biased toward basic and acidic residues.

As to quaternary structure, interacts with CTTN. In terms of tissue distribution, expressed in breast, colon and brain. In all 3 tissues, expressed in the microvasculature (at protein level). In addition, in the breast, found in the contractile myoepithelial cell layer which surrounds the breast ducts (at protein level). In the colon, expressed in the mucous membrane and colonic crypts and in the smooth muscle cell layer which provide movement of the colon (at protein level). In the cerebellum, localized around the Purkinje neurons and the granule cells of the granular layer, but not inside cell bodies (at protein level). Outside of the cerebellar cortex, expressed in glial cells (at protein level). Highly expressed away from the cell bodies within the dentate nucleus (at protein level).

The protein resides in the cytoplasm. Its subcellular location is the cell projection. The protein localises to the podosome. It is found in the invadopodium. It localises to the cytoskeleton. The protein resides in the stress fiber. In terms of biological role, may be involved in podosome and invadosome formation. The polypeptide is Actin filament-associated protein 1-like 1 (AFAP1L1) (Homo sapiens (Human)).